Reading from the N-terminus, the 441-residue chain is tRNA pseudouridine synthase Pus10 (441 aa).

Aspartate 268 acts as the Nucleophile in catalysis. Tyrosine 333 and tyrosine 405 together coordinate substrate.

It belongs to the pseudouridine synthase Pus10 family.

The catalysed reaction is uridine(54) in tRNA = pseudouridine(54) in tRNA. It carries out the reaction uridine(55) in tRNA = pseudouridine(55) in tRNA. Functionally, responsible for synthesis of pseudouridine from uracil-54 and uracil-55 in the psi GC loop of transfer RNAs. This chain is tRNA pseudouridine synthase Pus10, found in Thermosphaera aggregans (strain DSM 11486 / M11TL).